We begin with the raw amino-acid sequence, 401 residues long: Argininosuccinate synthase (401 aa).

ATP contacts are provided by residues 9 to 17 (AYSGGLDTS) and alanine 36. L-citrulline contacts are provided by tyrosine 87 and serine 92. Glycine 117 serves as a coordination point for ATP. L-aspartate is bound by residues threonine 119, asparagine 123, and aspartate 124. Asparagine 123 is an L-citrulline binding site. Residues arginine 127, serine 176, serine 185, glutamate 261, and tyrosine 273 each contribute to the L-citrulline site.

This sequence belongs to the argininosuccinate synthase family. Type 1 subfamily. Homotetramer.

Its subcellular location is the cytoplasm. The enzyme catalyses L-citrulline + L-aspartate + ATP = 2-(N(omega)-L-arginino)succinate + AMP + diphosphate + H(+). It participates in amino-acid biosynthesis; L-arginine biosynthesis; L-arginine from L-ornithine and carbamoyl phosphate: step 2/3. In Syntrophobacter fumaroxidans (strain DSM 10017 / MPOB), this protein is Argininosuccinate synthase.